Consider the following 250-residue polypeptide: tRNA (guanine-N(7)-)-methyltransferase (250 aa).

4 residues coordinate S-adenosyl-L-methionine: Glu79, Glu104, Asp131, and Asp154. Asp154 is an active-site residue. Substrate-binding positions include Lys158, Asp190, and 228–231 (TKFE).

This sequence belongs to the class I-like SAM-binding methyltransferase superfamily. TrmB family.

The catalysed reaction is guanosine(46) in tRNA + S-adenosyl-L-methionine = N(7)-methylguanosine(46) in tRNA + S-adenosyl-L-homocysteine. It functions in the pathway tRNA modification; N(7)-methylguanine-tRNA biosynthesis. Functionally, catalyzes the formation of N(7)-methylguanine at position 46 (m7G46) in tRNA. The chain is tRNA (guanine-N(7)-)-methyltransferase from Actinobacillus pleuropneumoniae serotype 5b (strain L20).